A 301-amino-acid polypeptide reads, in one-letter code: 2-phosphoglycerate kinase (301 aa).

Positions 2 to 89 (IRVIEKGDKV…FWRRFRKMKV (88 aa)) constitute an ATP-cone domain.

This sequence belongs to the 2-phosphoglycerate kinase family. A divalent metal cation serves as cofactor.

It catalyses the reaction (2R)-2-phosphoglycerate + ATP = (2R)-2,3-bisphosphoglycerate + ADP + H(+). The protein operates within thermoadapter biosynthesis; cyclic 2,3-diphosphoglycerate biosynthesis; cyclic 2,3-diphosphoglycerate from 2-phospho-D-glycerate: step 1/2. In terms of biological role, catalyzes the phosphorylation of 2-phosphoglycerate to 2,3-diphosphoglycerate. Involved in the biosynthesis of cyclic 2,3-bisphosphoglycerate, a thermoprotectant. The sequence is that of 2-phosphoglycerate kinase from Pyrococcus horikoshii (strain ATCC 700860 / DSM 12428 / JCM 9974 / NBRC 100139 / OT-3).